An 878-amino-acid chain; its full sequence is MKKVKKEKVIGPVVPVSYNRSILAAFEKQAKGKTCPLCNIKFSLASYRSHMNVCKVADDDDEIKVMASYTREEAILLRAGPEIVLGEENSGQEIPVNPKKKRRTGEEQLESTPNPPVVQAFDFDVPGPSTSSENLDPPSESSEVRSVEKEIKKSPVWENRRRSTRLAQNSQKSQSESQEAIVKKETATVLEVLASINNFETRIANSDRPTPYYVKCTVKILKKIISTMKSDGDFYADNFWLPSDIITFYRFVECLSDGAKCLLVRLFVRKPNWYHLEKLEQKYTEILNIRGAAVELMKWEFISDDSTLKTLNEALRISDITVLKNVAKKFKIDGNKNRQDLVQSLRKFALSQQSIFGGTGSVELAVLKSLKTELGTCIKIKDEMVDLFKCLFTLYCPVTTNSANVIDNPASTNVYQDLLYMMLSVENGSVEFPAPNPCPNIASFYKNRAMLMEYVTAKALESSLVLQMSNGDHDIALDLAIDAKEFLDQMPLEQKKYYESLEIHERKFTSIWVHTRCCGHATSVLEKQKKYGMAVEWQKDLLITNKDVQSCCLDSRGMWWDRMLLNLDSHLKVSVFPSYSQTKKRFFQEKTECAKMIQIALTDSSILEKELLSIQDRALKLKEMPPDFRPPLNIGTPMKRVITARTISKSLGDGRVNRFVFRDEEKEEDVECSVEEAARRWYIENDEFTTGVHDEGATWHTLFGLLFYDIIFCTDAVMASVWHSEVQDCPSDLSNTLYLKRKEKFEERFEWLKDADQETIEDNIRRIWGMKQNETNRECSWKHFQSGIEDCVSIFQCIPRPAMLSIFRRLAENYRNSRSGFPDLTLWNPEKKTVAVIEVKGPGDRLSTKQRLWLSFFADNGIKAEVCHVEAQNSRLLV.

The UBZ4-type zinc-finger motif lies at 32-59 (GKTCPLCNIKFSLASYRSHMNVCKVADD). 4 residues coordinate Zn(2+): Cys35, Cys38, His50, and Cys54. Residues 88-180 (ENSGQEIPVN…QKSQSESQEA (93 aa)) form a disordered region. The span at 142–161 (SEVRSVEKEIKKSPVWENRR) shows a compositional bias: basic and acidic residues. The segment covering 168 to 179 (QNSQKSQSESQE) has biased composition (low complexity). 4 residues coordinate Mn(2+): Glu695, Asp823, Glu838, and Val839. The VRR-NUC domain maps to 757–870 (QETIEDNIRR…GIKAEVCHVE (114 aa)).

It belongs to the FAN1 family. It depends on Mn(2+) as a cofactor. Mg(2+) is required as a cofactor.

It localises to the nucleus. The enzyme catalyses Hydrolytically removes 5'-nucleotides successively from the 3'-hydroxy termini of 3'-hydroxy-terminated oligonucleotides.. Its function is as follows. Nuclease required for the repair of DNA interstrand cross-links (ICL). Acts as a 5'-3' exonuclease that anchors at a cut end of DNA and cleaves DNA successively at every third nucleotide, allowing to excise an ICL from one strand through flanking incisions. This Caenorhabditis briggsae protein is Fanconi-associated nuclease 1 homolog (fan-1).